The sequence spans 122 residues: Ribosome-binding factor A (122 aa).

The protein belongs to the RbfA family. Monomer. Binds 30S ribosomal subunits, but not 50S ribosomal subunits or 70S ribosomes.

The protein localises to the cytoplasm. In terms of biological role, one of several proteins that assist in the late maturation steps of the functional core of the 30S ribosomal subunit. Associates with free 30S ribosomal subunits (but not with 30S subunits that are part of 70S ribosomes or polysomes). Required for efficient processing of 16S rRNA. May interact with the 5'-terminal helix region of 16S rRNA. This is Ribosome-binding factor A from Burkholderia thailandensis (strain ATCC 700388 / DSM 13276 / CCUG 48851 / CIP 106301 / E264).